Consider the following 122-residue polypeptide: Protein SPIRAL1-like 3 (122 aa).

Disordered regions lie at residues 1-78 (MGKA…NNYF) and 96-122 (KVHA…SGNK). Positions 32–61 (TMGTTTTTTTTTTTDGTGGRPITTTTTTVT) are enriched in low complexity. S73 is modified (phosphoserine).

Belongs to the SPIRAL1 family. Ubiquitous. Preferentially expressed in above-ground organs.

Acts redundantly with SPR1 in maintaining the cortical microtubules organization essential for anisotropic cell growth. The sequence is that of Protein SPIRAL1-like 3 (SP1L3) from Arabidopsis thaliana (Mouse-ear cress).